The following is a 126-amino-acid chain: MNLIEQLEQEEIARLGKTIPEFAPGDTVVVQVKVKEGNRERLQAYEGVVIAKRNRGLNSGFTVRKISSGEGVERTFQTYSPLVASIEVKRRGDVRRAKLYYLRERSGKSARIKEKLVRKEKPVVAA.

The protein belongs to the bacterial ribosomal protein bL19 family.

Its function is as follows. This protein is located at the 30S-50S ribosomal subunit interface and may play a role in the structure and function of the aminoacyl-tRNA binding site. The chain is Large ribosomal subunit protein bL19 from Dechloromonas aromatica (strain RCB).